Here is a 122-residue protein sequence, read N- to C-terminus: MALNIENIIAEIKEASILELNDLVKAIEEEFGVTAAAPVAAAGAAGGEEAAAKDSFDIELTAGGDKKVAVIKVVREITGEGLKEAKGLVDNAPSVLKEGVAAAEAEELKAKLEEAGATVTLK.

It belongs to the bacterial ribosomal protein bL12 family. Homodimer. Part of the ribosomal stalk of the 50S ribosomal subunit. Forms a multimeric L10(L12)X complex, where L10 forms an elongated spine to which 2 to 4 L12 dimers bind in a sequential fashion. Binds GTP-bound translation factors.

Functionally, forms part of the ribosomal stalk which helps the ribosome interact with GTP-bound translation factors. Is thus essential for accurate translation. The polypeptide is Large ribosomal subunit protein bL12 (Streptococcus mutans serotype c (strain ATCC 700610 / UA159)).